Consider the following 392-residue polypeptide: Probable tRNA sulfurtransferase (392 aa).

The THUMP domain occupies 59-167; that stretch reads ADITDRVKKV…DQAFVFSNKI (109 aa). Residues 184–185, 209–210, Arg266, Gly288, and Gln297 contribute to the ATP site; these read LL and HF.

The protein belongs to the ThiI family.

It localises to the cytoplasm. The catalysed reaction is [ThiI sulfur-carrier protein]-S-sulfanyl-L-cysteine + a uridine in tRNA + 2 reduced [2Fe-2S]-[ferredoxin] + ATP + H(+) = [ThiI sulfur-carrier protein]-L-cysteine + a 4-thiouridine in tRNA + 2 oxidized [2Fe-2S]-[ferredoxin] + AMP + diphosphate. It carries out the reaction [ThiS sulfur-carrier protein]-C-terminal Gly-Gly-AMP + S-sulfanyl-L-cysteinyl-[cysteine desulfurase] + AH2 = [ThiS sulfur-carrier protein]-C-terminal-Gly-aminoethanethioate + L-cysteinyl-[cysteine desulfurase] + A + AMP + 2 H(+). It participates in cofactor biosynthesis; thiamine diphosphate biosynthesis. Functionally, catalyzes the ATP-dependent transfer of a sulfur to tRNA to produce 4-thiouridine in position 8 of tRNAs, which functions as a near-UV photosensor. Also catalyzes the transfer of sulfur to the sulfur carrier protein ThiS, forming ThiS-thiocarboxylate. This is a step in the synthesis of thiazole, in the thiamine biosynthesis pathway. The sulfur is donated as persulfide by IscS. This is Probable tRNA sulfurtransferase from Alkaliphilus oremlandii (strain OhILAs) (Clostridium oremlandii (strain OhILAs)).